Reading from the N-terminus, the 347-residue chain is E3 ubiquitin-protein ligase ARK2C (347 aa).

2 disordered regions span residues 23–79 (PFQR…GTLH) and 268–289 (PHKY…GEES). The tract at residues 267–269 (FPH) is ubiquitin binding. The segment covering 276-285 (PQDSKGKKDE) has biased composition (basic and acidic residues). 2 residues coordinate Zn(2+): cysteine 295 and cysteine 298. Residues 295-336 (CTICLSMLEDGEDVRRLPCMHLFHQLCVDQWLAMSKKCPICR) form an RING-type; atypical zinc finger. A ubiquitin binding region spans residues 310–314 (RLPCM). 2 residues coordinate Zn(2+): histidine 318 and cysteine 321.

Belongs to the Arkadia family. As to quaternary structure, monomer; binding to the ubiquitin-conjugating enzyme E2 does not trigger homodimerization. Expressed in neurons of the nervous system.

It localises to the nucleus. It catalyses the reaction S-ubiquitinyl-[E2 ubiquitin-conjugating enzyme]-L-cysteine + [acceptor protein]-L-lysine = [E2 ubiquitin-conjugating enzyme]-L-cysteine + N(6)-ubiquitinyl-[acceptor protein]-L-lysine.. With respect to regulation, binds free ubiquitin non-covalently via its RING-type zinc finger. Ubiquitin-binding leads to enhance the E3 ubiquitin-protein ligase activity by stabilizing the ubiquitin-conjugating enzyme E2 (donor ubiquitin) in the 'closed' conformation and activating ubiquitin transfer. In terms of biological role, E3 ubiquitin-protein ligase that acts as a regulator of motor axon elongation. Required for efficient motor axon extension in the dorsal forelimb by enhancing the transcriptional responses of the SMAD1/SMAD5/SMAD8 effectors, which are activated downstream of BMP. Acts by mediating ubiquitination and degradation of SMAD inhibitors such as SMAD6, SMAD7, SKI and SNON isoform of SKIL. The polypeptide is E3 ubiquitin-protein ligase ARK2C (Mus musculus (Mouse)).